Consider the following 209-residue polypeptide: MWRMRGGATRRGSCCGGDGAADGRGPGRSGRARGGGSPSGGGGGVGWRGRADGARQQLEERFADLAASHLEAIRARDEWDRQNARLRQENARLRLENRRLKRENRSLFRQALRLPGEGGNGTPAEARRVPEEASTNRRARDSGREDEPGSPRALRARLEKLEAMYRRALLQLHLEQRGPRPSGDKEEQPLQEPDSGLRSRDSEPSGPWL.

Disordered regions lie at residues 1-55 (MWRM…DGAR), 111-157 (ALRL…LRAR), and 172-209 (LHLE…GPWL). Gly residues predominate over residues 14-47 (CCGGDGAADGRGPGRSGRARGGGSPSGGGGGVGW). Residues 70 to 114 (LEAIRARDEWDRQNARLRQENARLRLENRRLKRENRSLFRQALRL) adopt a coiled-coil conformation. Basic and acidic residues predominate over residues 125–149 (EARRVPEEASTNRRARDSGREDEPG). Serine 150 carries the phosphoserine modification. Positions 152–177 (RALRARLEKLEAMYRRALLQLHLEQR) form a coiled coil. Positions 174 to 188 (LEQRGPRPSGDKEEQ) are enriched in basic and acidic residues.

Widely expressed at low level. Expressed at higher level in testis, weakly expressed in muscle, colon, lung and spleen. Not detected in 3 non small cell lung carcinoma (NSCLC) cell lines with homozygous deletion of the 9p region, while it is down-regulated in 3 other tumor cell lines.

The chain is Tumor suppressor candidate gene 1 protein (TUSC1) from Homo sapiens (Human).